The chain runs to 402 residues: DNA primase DnaG (402 aa).

A Toprim domain is found at 165–243 (PNLIIVEGRA…KIDFVARAPV (79 aa)). Residues E171, D216, and D218 each coordinate Mg(2+).

It belongs to the archaeal DnaG primase family. Forms a ternary complex with MCM helicase and DNA. Component of the archaeal exosome complex. The cofactor is Mg(2+).

It carries out the reaction ssDNA + n NTP = ssDNA/pppN(pN)n-1 hybrid + (n-1) diphosphate.. Its function is as follows. RNA polymerase that catalyzes the synthesis of short RNA molecules used as primers for DNA polymerase during DNA replication. Also part of the exosome, which is a complex involved in RNA degradation. Acts as a poly(A)-binding protein that enhances the interaction between heteromeric, adenine-rich transcripts and the exosome. The chain is DNA primase DnaG from Saccharolobus islandicus (strain Y.N.15.51 / Yellowstone #2) (Sulfolobus islandicus).